The chain runs to 327 residues: MGGSALNQGVLEGDDAPGQSLYERLSQRMLDISGDRGVLKDVIREGAGDLVAPDASVLVKYSGYLEHMDRPFDSNYFRKTPRLMKLGEDITLWGMELGLLSMRRGELARFLFKPNYAYGTLGCPPLIPPNTTVLFEIELLDFLDCAESDKFCALSAEQQDQFPLQKVLKVAATEREFGNYLFRQNRFYDAKVRYKRALLLLRRRSAPPEEQHLVEAAKLPVLLNLSFTYLKLDRPTIALCYGEQALIIDQKNAKALFRCGQACLLLTEYQKARDFLVRAQKEQPFNHDINNELKKLASCYRDYVDKEKEMWHRMFAPCGDGSTAGES.

Positions 54–143 (DASVLVKYSG…LFEIELLDFL (90 aa)) constitute a PPIase FKBP-type domain. TPR repeat units follow at residues 171–204 (AATE…LRRR), 219–252 (LPVL…DQKN), and 253–286 (AKAL…QPFN).

The protein belongs to the FKBP6 family. In terms of assembly, interacts (via TPR repeats) with HSP90. Interacts with HSP72/HSPA2 and CLTC. Interacts with GAPDH; leading to inhibit GAPDH catalytic activity. Detected in all tissues examined, with higher expression in testis, heart, skeletal muscle, liver, and kidney.

The protein localises to the cytoplasm. Its subcellular location is the nucleus. Has an essential role in spermatogenesis. It is required to repress transposable elements and prevent their mobilization, which is essential for the germline integrity. Acts via the piRNA metabolic process, which mediates the repression of transposable elements during meiosis by forming complexes composed of piRNAs and Piwi proteins and govern the methylation and subsequent repression of transposons. Acts as a co-chaperone via its interaction with HSP90 and is required for the piRNA amplification process, the secondary piRNA biogenesis. May be required together with HSP90 in removal of 16 nucleotide ping-pong by-products from Piwi complexes, possibly facilitating turnover of Piwi complexes. This Homo sapiens (Human) protein is Inactive peptidyl-prolyl cis-trans isomerase FKBP6 (FKBP6).